A 31-amino-acid chain; its full sequence is Kappa-theraphotoxin-Ps1b (31 aa).

3 disulfides stabilise this stretch: cysteine 2–cysteine 16, cysteine 9–cysteine 21, and cysteine 15–cysteine 25. At methionine 31 the chain carries Methionine amide.

The protein belongs to the neurotoxin 30 (phrixotoxin) family. In terms of tissue distribution, expressed by the venom gland.

The protein localises to the secreted. Potent and specific blocker of Kv4.2/KCND2 (IC(50)=34 nM) and Kv4.3/KCND3 (IC(50)=71 nM) potassium channels. Acts by altering the gating properties of these channels. This Paraphysa scrofa (Chilean copper tarantula) protein is Kappa-theraphotoxin-Ps1b.